Here is a 669-residue protein sequence, read N- to C-terminus: DNA ligase (669 aa).

NAD(+) is bound by residues 33 to 37 (DVTYD), 82 to 83 (SL), and Glu115. Lys117 (N6-AMP-lysine intermediate) is an active-site residue. 4 residues coordinate NAD(+): Arg138, Glu172, Lys286, and Lys310. Residues Cys401, Cys404, Cys417, and Cys422 each coordinate Zn(2+). The 81-residue stretch at 589–669 (IDSSFLFGKK…DIKNLVNLDD (81 aa)) folds into the BRCT domain.

The protein belongs to the NAD-dependent DNA ligase family. LigA subfamily. Requires Mg(2+) as cofactor. Mn(2+) serves as cofactor.

The catalysed reaction is NAD(+) + (deoxyribonucleotide)n-3'-hydroxyl + 5'-phospho-(deoxyribonucleotide)m = (deoxyribonucleotide)n+m + AMP + beta-nicotinamide D-nucleotide.. Functionally, DNA ligase that catalyzes the formation of phosphodiester linkages between 5'-phosphoryl and 3'-hydroxyl groups in double-stranded DNA using NAD as a coenzyme and as the energy source for the reaction. It is essential for DNA replication and repair of damaged DNA. In Borrelia recurrentis (strain A1), this protein is DNA ligase.